The primary structure comprises 442 residues: Zuotin (442 aa).

Residues 49-84 (RQRHGRTFSEDERLEVKNKVQEEVKEESEDEEEDPA) are disordered. Phosphothreonine is present on Thr55. Basic and acidic residues predominate over residues 55–71 (TFSEDERLEVKNKVQEE). Phosphoserine is present on residues Ser57 and Ser76. A compositionally biased stretch (acidic residues) spans 72–83 (VKEESEDEEEDP). Residues 97-167 (DHYAVLGLSK…VRRRQFDSVD (71 aa)) form the J domain. Disordered regions lie at residues 242-270 (DGES…DNAR) and 306-331 (GARE…EAAA). The span at 316–330 (KKKEEEERRAAEEAA) shows a compositional bias: basic and acidic residues.

RAC is a heterodimer of the Hsp70/DnaK-type chaperone ssz1 and the Hsp40/DnaJ-type chaperone zuo1. RAC associates with ribosomes via zuo1.

Its subcellular location is the cytoplasm. Its function is as follows. Component of the ribosome-associated complex (RAC), a heterodimeric chaperone complex involved in regulation of accurate translation termination and in folding or maintaining nascent polypeptides in a folding-competent state. RAC stimulates the ATPase activity of the ribosome-associated pool of Hsp70-type chaperones SSB1/SSB2 that bind to the nascent polypeptide chain. In Schizosaccharomyces pombe (strain 972 / ATCC 24843) (Fission yeast), this protein is Zuotin (zuo1).